The following is a 341-amino-acid chain: HTH-type transcriptional repressor PurR (341 aa).

Residues 2-56 (ATIKDVAKRANVSTTTVSHVINKTRFVAEETRNAVWAAIKELHYSPSAVARSLKV) form the HTH lacI-type domain. The H-T-H motif DNA-binding region spans 4–23 (IKDVAKRANVSTTTVSHVIN). A DNA-binding region spans residues 48–56 (SAVARSLKV). Residues Tyr-73, Arg-190, Thr-192, Phe-221, and Asp-275 each contribute to the hypoxanthine site.

Homodimer.

The protein operates within purine metabolism; purine nucleotide biosynthesis [regulation]. Functionally, is the main repressor of the genes involved in the de novo synthesis of purine nucleotides, regulating purB, purC, purEK, purF, purHD, purL, purMN and guaBA expression. PurR is allosterically activated to bind its cognate DNA by binding the purine corepressors, hypoxanthine or guanine, thereby effecting transcription repression. The sequence is that of HTH-type transcriptional repressor PurR from Salmonella typhimurium (strain LT2 / SGSC1412 / ATCC 700720).